The primary structure comprises 315 residues: Zinc finger CCCH domain-containing protein 23 (315 aa).

Positions Met1–Gln21 are disordered. 2 C3H1-type zinc fingers span residues Tyr131–Phe157 and Arg165–Glu189.

The chain is Zinc finger CCCH domain-containing protein 23 from Arabidopsis thaliana (Mouse-ear cress).